The primary structure comprises 23 residues: Basic phospholipase A2 CTs-G6 (23 aa).

The cofactor is Ca(2+). Contains 7 disulfide bonds. As to expression, expressed by the venom gland.

It localises to the secreted. It carries out the reaction a 1,2-diacyl-sn-glycero-3-phosphocholine + H2O = a 1-acyl-sn-glycero-3-phosphocholine + a fatty acid + H(+). Functionally, snake venom phospholipase A2 (PLA2) that induces local edema a few hours after injection (5-10 ug) in the hind paw. PLA2 catalyzes the calcium-dependent hydrolysis of the 2-acyl groups in 3-sn-phosphoglycerides. The chain is Basic phospholipase A2 CTs-G6 from Trimeresurus stejnegeri (Chinese green tree viper).